A 1014-amino-acid polypeptide reads, in one-letter code: Poly [ADP-ribose] polymerase 1 (1014 aa).

N-acetylalanine is present on Ala-2. Residues 9 to 93 (YRVEYAKSGR…KVKKTAEAGG (85 aa)) form a PARP-type 1 zinc finger. Cys-21 and Cys-24 together coordinate Zn(2+). Ser-41 is modified (phosphoserine). Residues His-53 and Cys-56 each contribute to the Zn(2+) site. An N6-acetyllysine mark is found at Lys-97 and Lys-105. Residues 113-203 (FAAEYAKSNR…ALKKQLPGVK (91 aa)) form a PARP-type 2 zinc finger. 2 residues coordinate Zn(2+): Cys-125 and Cys-128. Lys-131 is modified (N6-acetyllysine). Zn(2+) is bound by residues His-159 and Cys-162. 3 positions are modified to phosphoserine: Ser-177, Ser-179, and Ser-185. Residue Lys-192 forms a Glycyl lysine isopeptide (Lys-Gly) (interchain with G-Cter in SUMO2) linkage. The segment at 198-233 (QLPGVKSEGKRKGDEVDGVDEVAKKKSKKEKDKDSK) is disordered. Residue Lys-203 forms a Glycyl lysine isopeptide (Lys-Gly) (interchain with G-Cter in SUMO1); alternate linkage. A Glycyl lysine isopeptide (Lys-Gly) (interchain with G-Cter in SUMO2); alternate cross-link involves residue Lys-203. Over residues 204-233 (SEGKRKGDEVDGVDEVAKKKSKKEKDKDSK) the composition is skewed to basic and acidic residues. 2 short sequence motifs (nuclear localization signal) span residues 207-209 (KRK) and 221-226 (KKKSKK). The region spanning 225 to 359 (KKEKDKDSKL…VKKQDRIFPP (135 aa)) is the PADR1 zinc-binding domain. Residue Lys-249 forms a Glycyl lysine isopeptide (Lys-Gly) (interchain with G-Cter in SUMO2) linkage. Residues Ser-274 and Ser-277 each carry the phosphoserine modification. Positions 290–332 (GALLPCEECSGQLVFKSDAYYCTGDVTAWTKCMVKTQTPNRKE) are zinc ribbon. Cys-295, Cys-298, Cys-311, and Cys-321 together coordinate Zn(2+). Residues 361–385 (TSASVAATPPPSTASAPAAVNSSAS) form a disordered region. Ser-364 carries the post-translational modification Phosphoserine. Position 368 is a phosphothreonine (Thr-368). The interval 373–524 (TASAPAAVNS…GINKSEKRMK (152 aa)) is automodification domain. The region spanning 385–476 (SADKPLSNMK…KSLQELFLAH (92 aa)) is the BRCT domain. Asp-387 carries the post-translational modification PolyADP-ribosyl aspartic acid. A polyADP-ribosyl glutamic acid mark is found at Glu-407, Glu-413, Glu-435, Glu-437, Glu-444, Glu-445, Glu-448, and Glu-456. A Glycyl lysine isopeptide (Lys-Gly) (interchain with G-Cter in SUMO2) cross-link involves residue Lys-467. PolyADP-ribosyl glutamic acid occurs at positions 471 and 484. Lys-486 is covalently cross-linked (Glycyl lysine isopeptide (Lys-Gly) (interchain with G-Cter in SUMO1); alternate). A Glycyl lysine isopeptide (Lys-Gly) (interchain with G-Cter in SUMO2); alternate cross-link involves residue Lys-486. 2 positions are modified to polyADP-ribosyl glutamic acid: Glu-488 and Glu-491. Residues Ser-499, Ser-504, and Ser-507 each carry the ADP-ribosylserine modification. A Glycyl lysine isopeptide (Lys-Gly) (interchain with G-Cter in SUMO2) cross-link involves residue Lys-512. Residues Glu-513 and Glu-514 each carry the polyADP-ribosyl glutamic acid modification. Position 519 is an ADP-ribosylserine (Ser-519). Glu-520 is subject to PolyADP-ribosyl glutamic acid. The residue at position 521 (Lys-521) is an N6-(ADP-ribosyl)lysine. Lys-528 is covalently cross-linked (Glycyl lysine isopeptide (Lys-Gly) (interchain with G-Cter in SUMO2)). The WGR domain occupies 542-638 (SAHVLEKGGK…KNFTKYPKKF (97 aa)). Position 594 is a phosphothreonine; by PRKDC (Thr-594). N6-acetyllysine occurs at positions 600 and 621. The 118-residue stretch at 662–779 (KSKLPKPVQD…DIEVAYSLLR (118 aa)) folds into the PARP alpha-helical domain. Lys-748 participates in a covalent cross-link: Glycyl lysine isopeptide (Lys-Gly) (interchain with G-Cter in SUMO1); alternate. Lys-748 participates in a covalent cross-link: Glycyl lysine isopeptide (Lys-Gly) (interchain with G-Cter in SUMO2); alternate. 2 positions are modified to phosphoserine: Ser-782 and Ser-786. The 227-residue stretch at 788–1014 (DPIDVNYEKL…LKFNFKTSLW (227 aa)) folds into the PARP catalytic domain. Residues 862–864 (HGS), Gly-871, Arg-878, and Ser-904 each bind NAD(+). The active-site For poly [ADP-ribose] polymerase activity is the Glu-988.

The protein belongs to the ARTD/PARP family. In terms of assembly, homodimer; PARP-type zinc-fingers from separate PARP1 molecules form a dimer module that specifically recognizes DNA strand breaks. Heterodimer; heterodimerizes with PARP2. Interacts (via the PARP catalytic domain) with HPF1. Interacts with NMNAT1. Interacts with nucleosomes; with a preference for nucleosomes containing H2A.X. Interacts with APTX. Component of a base excision repair (BER) complex, containing at least XRCC1, PARP1, PARP2, POLB and LRIG3. Interacts with SRY. The SWAP complex consists of NPM1, NCL, PARP1 and SWAP70. Interacts with TIAM2. Interacts with PARP3; leading to activate PARP1 in absence of DNA. Interacts (when poly-ADP-ribosylated) with CHD1L (via macro domain). Interacts with the DNA polymerase alpha catalytic subunit POLA1; this interaction functions as part of the control of replication fork progression. Interacts with EEF1A1 and TXK. Interacts with RNF4. Interacts with RNF146. Interacts with ZNF423. Interacts with APLF. Interacts with SNAI1 (via zinc fingers); the interaction requires SNAI1 to be poly-ADP-ribosylated and non-phosphorylated (active) by GSK3B. Interacts (when poly-ADP-ribosylated) with PARP9. Interacts with NR4A3; activates PARP1 by improving acetylation of PARP1 and suppressing the interaction between PARP1 and SIRT1. Interacts (via catalytic domain) with PUM3; the interaction inhibits the poly-ADP-ribosylation activity of PARP1 and the degradation of PARP1 by CASP3 following genotoxic stress. Interacts with ZNF365. Interacts with RRP1B. Interacts with TIMELESS; the interaction is direct. Interacts with CGAS; leading to impede the formation of the PARP1-TIMELESS complex. Interacts with KHDC3L, the interaction is increased following the formation of DNA double-strand breaks. Interacts (when auto-poly-ADP-ribosylated) with XRCC1; leading to inhibit PARP1 ADP-ribosyltransferase activity. Interacts with SPINDOC; promoting PARP1 ADP-ribosyltransferase activity. Interacts with BANF1; leading to inhibit PARP1 ADP-ribosyltransferase activity in response to oxidative DNA damage. Interacts (when sumoylated and ubiquitinated) with VCP/p97; leading to its extraction from chromatin. Interacts with YARS1; Interacts with PACMP micropeptide; interaction. Interacts with PACMP micropeptide; Interacts with PACMP micropeptide; interaction. Interacts (when poly-ADP-ribosylated) with isoform 1 of MACROH2A1; MACROH2A1 specifically binds to poly-ADP-ribose chains and inhibits PARP1 activity, limiting the consumption of nuclear NAD(+). Interacts with CARM1; promoting recruitment to replication forks. Interacts with RECQL. Interacts with ZNF32; the interaction reshapes ZNF432 interacting proteins. Interacts with TPRN; TPRN interacts with a number of DNA damage response proteins, is recruited to sites of DNA damage and may play a role in DNA damage repair. Interacts (when auto-poly-ADP-ribosylated) with AIFM1. As to quaternary structure, (Microbial infection) Interacts with human herpesvirus 8 (KSHV) protein RTA/ORF50; this interaction negatively regulates RTA/ORF50 transactivation activity. In terms of processing, poly-ADP-ribosylated on serine, glutamate and aspartate residues by autocatalysis. Auto-ADP-ribosylation on serine takes place following interaction with HPF1. Auto poly-ADP-ribosylation on serine residues promotes its dissociation from chromatin. Poly-ADP-ribosylated by PARP2; poly-ADP-ribosylation mediates the recruitment of CHD1L to DNA damage sites. Mono-ADP-ribosylated at Lys-521 by SIRT6 in response to oxidative stress, promoting recruitment to double-strand breaks (DSBs) sites. Post-translationally, phosphorylated at Thr-594 by PRKDC in response to DNA damage following virus infection, promoting its translocation to the cytosol. Phosphorylated by TXK. S-nitrosylated, leading to inhibit transcription regulation activity. In terms of processing, proteolytically cleaved by caspase-3 (CASP3) and caspase-7 (CASP7) in response to apoptosis to generate the Poly [ADP-ribose] polymerase 1, processed N-terminus and Poly [ADP-ribose] polymerase 1, processed C-terminus forms. CASP3-mediated cleavage is promoted by the TP53/p53-induced long non-coding RNA SPARCLE, which binds PARP1 in response to genotoxic stress. Post-translationally, sumoylated with SUMO1 or SUMO2 by PIAS4 following prolonged residence (trapping) to chromatin. Sumoylation promotes ubiquitination by RNF4 and removal from chromatin by VCP/p97. Ubiquitinated by RNF4 following sumoylation by PIAS4 in response to prolonged residence (trapping) to chromatin. Ubiquitination promotes removal from chromatin by VCP/p97.

The protein resides in the chromosome. It localises to the nucleus. Its subcellular location is the nucleolus. The protein localises to the cytoplasm. It is found in the cytosol. It carries out the reaction NAD(+) + (ADP-D-ribosyl)n-acceptor = nicotinamide + (ADP-D-ribosyl)n+1-acceptor + H(+).. The catalysed reaction is L-seryl-[protein] + NAD(+) = O-(ADP-D-ribosyl)-L-seryl-[protein] + nicotinamide + H(+). It catalyses the reaction L-aspartyl-[protein] + NAD(+) = 4-O-(ADP-D-ribosyl)-L-aspartyl-[protein] + nicotinamide. The enzyme catalyses L-glutamyl-[protein] + NAD(+) = 5-O-(ADP-D-ribosyl)-L-glutamyl-[protein] + nicotinamide. It carries out the reaction L-tyrosyl-[protein] + NAD(+) = O-(ADP-D-ribosyl)-L-tyrosyl-[protein] + nicotinamide + H(+). The catalysed reaction is L-histidyl-[protein] + NAD(+) = N(tele)-(ADP-D-ribosyl)-L-histidyl-[protein] + nicotinamide + H(+). With respect to regulation, ADP-ribosyltransferase activity is regulated via an allosteric activation mechanism. In absence of activation signal, PARP1 is autoinhibited by the PARP alpha-helical domain (also named HD region), which prevents effective NAD(+)-binding. Activity is highly stimulated by signals, such as DNA strand breaks. Binding to damaged DNA unfolds the PARP alpha-helical domain, relieving autoinhibition. Poly-ADP-ribosyltransferase activity is tightly regulated and PARP1 is removed from damaged chromatin following initial poly-ADP-ribosylation of chromatin to avoid prolonged residence (trapping) that has cytotoxic consequences. A number of factors (VCP/p97) or post-translational modifications (auto-poly-ADP-ribosylation or ubiquitination) promote PARP1 removal from chromatin. ADP-ribosyltransferase activity is inhibited by a number of PARP inhibitors (PARPi) compounds, that are used the treatment of breast or ovarian cancers that have defects in DNA repair by homologous recombination. PARPi molecules can be classified in three categories: type I compounds (EB-47, UKTT15 and BAD) that promote allosteric retention of PARP1 on DNA, type II inhibitors (talazoparib and olaparib) that mediate a non-allosteric inhibition, and type III inhibitors (rucaparib, niraparib, and veliparib) that promote allosteric release from DNA. Trapping to chromatin by PARPi molecules triggers activation of the cGAS-STING pathway. Its function is as follows. Poly-ADP-ribosyltransferase that mediates poly-ADP-ribosylation of proteins and plays a key role in DNA repair. Mediates glutamate, aspartate, serine, histidine or tyrosine ADP-ribosylation of proteins: the ADP-D-ribosyl group of NAD(+) is transferred to the acceptor carboxyl group of target residues and further ADP-ribosyl groups are transferred to the 2'-position of the terminal adenosine moiety, building up a polymer with an average chain length of 20-30 units. Serine ADP-ribosylation of proteins constitutes the primary form of ADP-ribosylation of proteins in response to DNA damage. Specificity for the different amino acids is conferred by interacting factors, such as HPF1 and NMNAT1. Following interaction with HPF1, catalyzes serine ADP-ribosylation of target proteins; HPF1 confers serine specificity by completing the PARP1 active site. Also catalyzes tyrosine ADP-ribosylation of target proteins following interaction with HPF1. Following interaction with NMNAT1, catalyzes glutamate and aspartate ADP-ribosylation of target proteins; NMNAT1 confers glutamate and aspartate specificity. PARP1 initiates the repair of DNA breaks: recognizes and binds DNA breaks within chromatin and recruits HPF1, licensing serine ADP-ribosylation of target proteins, such as histones (H2BS6ADPr and H3S10ADPr), thereby promoting decompaction of chromatin and the recruitment of repair factors leading to the reparation of DNA strand breaks. HPF1 initiates serine ADP-ribosylation but restricts the polymerase activity of PARP1 in order to limit the length of poly-ADP-ribose chains. In addition to base excision repair (BER) pathway, also involved in double-strand breaks (DSBs) repair: together with TIMELESS, accumulates at DNA damage sites and promotes homologous recombination repair by mediating poly-ADP-ribosylation. Mediates the poly-ADP-ribosylation of a number of proteins, including itself, APLF, CHFR, RPA1 and NFAT5. In addition to proteins, also able to ADP-ribosylate DNA: catalyzes ADP-ribosylation of DNA strand break termini containing terminal phosphates and a 2'-OH group in single- and double-stranded DNA, respectively. Required for PARP9 and DTX3L recruitment to DNA damage sites. PARP1-dependent PARP9-DTX3L-mediated ubiquitination promotes the rapid and specific recruitment of 53BP1/TP53BP1, UIMC1/RAP80, and BRCA1 to DNA damage sites. PARP1-mediated DNA repair in neurons plays a role in sleep: senses DNA damage in neurons and promotes sleep, facilitating efficient DNA repair. In addition to DNA repair, also involved in other processes, such as transcription regulation, programmed cell death, membrane repair, adipogenesis and innate immunity. Acts as a repressor of transcription: binds to nucleosomes and modulates chromatin structure in a manner similar to histone H1, thereby altering RNA polymerase II. Acts both as a positive and negative regulator of transcription elongation, depending on the context. Acts as a positive regulator of transcription elongation by mediating poly-ADP-ribosylation of NELFE, preventing RNA-binding activity of NELFE and relieving transcription pausing. Acts as a negative regulator of transcription elongation in response to DNA damage by catalyzing poly-ADP-ribosylation of CCNT1, disrupting the phase separation activity of CCNT1 and subsequent activation of CDK9. Involved in replication fork progression following interaction with CARM1: mediates poly-ADP-ribosylation at replication forks, slowing fork progression. Poly-ADP-ribose chains generated by PARP1 also play a role in poly-ADP-ribose-dependent cell death, a process named parthanatos. Also acts as a negative regulator of the cGAS-STING pathway. Acts by mediating poly-ADP-ribosylation of CGAS: PARP1 translocates into the cytosol following phosphorylation by PRKDC and catalyzes poly-ADP-ribosylation and inactivation of CGAS. Acts as a negative regulator of adipogenesis: catalyzes poly-ADP-ribosylation of histone H2B on 'Glu-35' (H2BE35ADPr) following interaction with NMNAT1, inhibiting phosphorylation of H2B at 'Ser-36' (H2BS36ph), thereby blocking expression of pro-adipogenetic genes. Involved in the synthesis of ATP in the nucleus, together with NMNAT1, PARG and NUDT5. Nuclear ATP generation is required for extensive chromatin remodeling events that are energy-consuming. Functionally, promotes AIFM1-mediated apoptosis. This form, which translocates into the cytoplasm following cleavage by caspase-3 (CASP3) and caspase-7 (CASP7) in response to apoptosis, is auto-poly-ADP-ribosylated and serves as a poly-ADP-ribose carrier to induce AIFM1-mediated apoptosis. This cleavage form irreversibly binds to DNA breaks and interferes with DNA repair, promoting DNA damage-induced apoptosis. The protein is Poly [ADP-ribose] polymerase 1 of Homo sapiens (Human).